The following is a 485-amino-acid chain: MASISAASATATASTKLAYPYSPSSSSSSSNTAAVFPSNSSKLILSSSFTPTPSTLFLHSPTTTPSTTHPRRFTVRAARGKFERKKPHVNIGTIGHVDHGKTTLTAALTMALASMGNSAPKKYDEIDAAPEERARGITINTATVEYETENRHYAHVDCPGHADYVKNMITGAAQMDGAILVVSGADGPMPQTKEHILLAKQVGVPNMVVFLNKQDQVDDEELLELVELEVRELLSSYEFPGDEIPIISGSALLALEALMANPSIKRGENQWVDKIYQLMDNVDEYIPIPQRQTELPFLMAIEDVFSITGRGTVATGRVERGTVKVGEIVDIVGLKDTRNTTVTGVEMFQKILDEAMAGDNVGLLLRGIQKIDIQRGMVLAKPGTITPHTKFEALVYVLKKEEGGRHSPFFAGYRPQFYMRTTDVTGKVTVIMSDKGEESKMVMPGDRVNMVVELIMPVACEQGMRFAIREGGKTVGAGVIQKILE.

A chloroplast-targeting transit peptide spans 1 to 76; sequence MASISAASAT…TTHPRRFTVR (76 aa). In terms of domain architecture, tr-type G spans 86 to 290; that stretch reads KPHVNIGTIG…NVDEYIPIPQ (205 aa). The interval 95–102 is G1; it reads GHVDHGKT. 95 to 102 lines the GTP pocket; it reads GHVDHGKT. Residues 136 to 140 are G2; the sequence is GITIN. A G3 region spans residues 157–160; the sequence is DCPG. Residues 157–161 and 212–215 each bind GTP; these read DCPGH and NKQD. The interval 212-215 is G4; the sequence is NKQD. The tract at residues 250-252 is G5; it reads SAL.

The protein belongs to the TRAFAC class translation factor GTPase superfamily. Classic translation factor GTPase family. EF-Tu/EF-1A subfamily.

Its subcellular location is the plastid. It localises to the chloroplast. Functionally, this protein promotes the GTP-dependent binding of aminoacyl-tRNA to the A-site of ribosomes during protein biosynthesis. The sequence is that of Elongation factor TuB, chloroplastic (TUFB) from Nicotiana sylvestris (Wood tobacco).